Consider the following 717-residue polypeptide: Translation initiation factor eIF2B subunit epsilon (717 aa).

Residues 1 to 14 (MAATAAVPGAAAGR) are compositionally biased toward low complexity. The disordered stretch occupies residues 1–37 (MAATAAVPGAAAGRASKRGGGGSGGGGTQGAEEEPPP). Residue Arg18 is modified to Omega-N-methylarginine. Residues 18 to 29 (RGGGGSGGGGTQ) are compositionally biased toward gly residues. Ser23 carries the post-translational modification Phosphoserine. Glycyl lysine isopeptide (Lys-Gly) (interchain with G-Cter in ubiquitin) cross-links involve residues Lys57 and Lys99. Ser126 bears the Phosphoserine mark. Residues Lys137 and Lys213 each participate in a glycyl lysine isopeptide (Lys-Gly) (interchain with G-Cter in ubiquitin) cross-link. Residue Thr318 is modified to Phosphothreonine. The disordered stretch occupies residues 442–479 (GSVISLHPPDAEEDEDDGQFSDDSGADQEKEKVKLKGY). A phosphoserine mark is found at Ser446, Ser462, and Ser465. Positions 452–467 (AEEDEDDGQFSDDSGA) are enriched in acidic residues. Lys501 participates in a covalent cross-link: Glycyl lysine isopeptide (Lys-Gly) (interchain with G-Cter in ubiquitin). Positions 517–538 (TEEESETESEGSVDPEELDSRA) are disordered. Acidic residues predominate over residues 519 to 533 (EESETESEGSVDPEE). Phosphoserine occurs at positions 528 and 536. Residues 539 to 716 (GSPQLDDIRV…REAEEESSED (178 aa)) enclose the W2 domain. Position 540 is a phosphoserine; by DYRK2 (Ser540). Ser713 carries the phosphoserine modification.

The protein belongs to the eIF-2B gamma/epsilon subunits family. Component of the translation initiation factor 2B (eIF2B) complex which is a heterodecamer of two sets of five different subunits: alpha, beta, gamma, delta and epsilon. Subunits alpha, beta and delta comprise a regulatory subcomplex and subunits epsilon and gamma comprise a catalytic subcomplex. Within the complex, the hexameric regulatory complex resides at the center, with the two heterodimeric catalytic subcomplexes bound on opposite sides. Phosphorylated at Ser-540 by DYRK2; this is required for subsequent phosphorylation by GSK3B. Phosphorylated on serine and threonine residues by GSK3B; phosphorylation inhibits its function. Post-translationally, polyubiquitinated, probably by NEDD4.

The protein resides in the cytoplasm. It is found in the cytosol. Its activity is regulated as follows. Activated by the chemical integrated stress response (ISR) inhibitor ISRIB which stimulates guanine nucleotide exchange factor activity for both phosphorylated and unphosphorylated eIF2. In terms of biological role, acts as a component of the translation initiation factor 2B (eIF2B) complex, which catalyzes the exchange of GDP for GTP on eukaryotic initiation factor 2 (eIF2) gamma subunit. Its guanine nucleotide exchange factor activity is repressed when bound to eIF2 complex phosphorylated on the alpha subunit, thereby limiting the amount of methionyl-initiator methionine tRNA available to the ribosome and consequently global translation is repressed. This Mus musculus (Mouse) protein is Translation initiation factor eIF2B subunit epsilon (Eif2b5).